Consider the following 447-residue polypeptide: Protein odr-4 homolog (447 aa).

A run of 2 helical transmembrane segments spans residues 82 to 102 (MLPG…ELAD) and 425 to 445 (IGVI…FHYF).

It belongs to the ODR-4 family. Ubiquitously expressed.

It localises to the membrane. Its function is as follows. May play a role in the trafficking of a subset of G-protein coupled receptors. This chain is Protein odr-4 homolog (Odr4), found in Mus musculus (Mouse).